A 193-amino-acid chain; its full sequence is Rho-related protein racF1 (193 aa).

10–17 (GDGAVGKT) serves as a coordination point for GTP. The Effector region signature appears at 32–40 (YIPTVFDNY). Residues 57-61 (DTAGQ) and 115-118 (TKQD) contribute to the GTP site. Cys190 carries the post-translational modification Cysteine methyl ester. Residue Cys190 is the site of S-geranylgeranyl cysteine attachment. A propeptide spans 191–193 (TIM) (removed in mature form).

It belongs to the small GTPase superfamily. Rho family. Interacts with pakB.

The protein resides in the membrane. Its function is as follows. Might act in concert and/or share functions with other members of the RHO family in the regulation of a subset of cytoskeletal rearrangements that are required for these processes. The sequence is that of Rho-related protein racF1 (racF1) from Dictyostelium discoideum (Social amoeba).